Here is a 562-residue protein sequence, read N- to C-terminus: Efflux pump apf11 (562 aa).

2 stretches are compositionally biased toward low complexity: residues 1-10 (MGDISAATKA) and 18-30 (TPET…SSDT). The disordered stretch occupies residues 1 to 36 (MGDISAATKAPAPPTPATPETNTTSSSSDTDVQHEP). N22 carries an N-linked (GlcNAc...) asparagine glycan. 8 consecutive transmembrane segments (helical) span residues 46-66 (LVIF…TIVA), 83-103 (AWYG…FGKI), 110-130 (KLVF…CALA), 141-161 (AIAG…TALT), 169-189 (VYTA…PIIG), 200-220 (WCFW…VFCL), 249-269 (GGLA…WGGT), and 278-298 (IIVL…HQHW). N-linked (GlcNAc...) asparagine glycosylation is present at N312. The next 6 membrane-spanning stretches (helical) occupy residues 317–337 (MFLL…YYLP), 356–376 (LAMV…AGAV), 382–404 (FVFF…HPSI), 414–434 (ILFG…VQVA), 447–467 (VMLV…TLFL), and 516–536 (FLIG…IRWI).

Belongs to the major facilitator superfamily. TCR/Tet family.

Its subcellular location is the membrane. Its pathway is secondary metabolite biosynthesis. Functionally, efflux pump; part of the gene cluster that mediates the biosynthesis of the cyclic tetrapeptide apicidin F (APF). This is Efflux pump apf11 (apf11) from Gibberella fujikuroi (strain CBS 195.34 / IMI 58289 / NRRL A-6831) (Bakanae and foot rot disease fungus).